Reading from the N-terminus, the 493-residue chain is MEFHQIDERNQALLSKIAVDDGHGENSPYFDGWKAYDNDPFHPEDNPLGVIQMGLAENQLSFDMIVDWIRKHPEASICTPKGLERFKSIANFQDYHGLPEFRNGIASFMGKVRGGRVQFDPSRIVMGGGATGASETVIFCLADPGDAFLVPSPYYAAFDRDLKWRTRAQIIRVHCNSSNNFQVTKAALEIAYKKAQEANIKVKGVIITNPSNPLGTTYDRDTLKTLVTFVNQHDIHLICDEIYSATVFKAPTFISIAQIVEEMEHCKKELIHILYSLSKDMGLPGFRVGIIYSYNDVVVRRARQMSSFGLVSSQTQHLLAAMLSDEDFVDKFLAENSKRLAERHARFTKELDKMGITCLNSNAGVFVWMDLRRLLKDQTFKAEMELWRVIINEVKLNVSPGSSFHVTEPGWFRVCFANMDDNTVDVALNRIHSFVENIDKKEDNTVAMPSKTRRRENKLRLSFSFSGRRYDEGNVLNSPHTMSPHSPLVIAKN.

Lys279 carries the N6-(pyridoxal phosphate)lysine modification.

The protein belongs to the class-I pyridoxal-phosphate-dependent aminotransferase family. Homodimer. Requires pyridoxal 5'-phosphate as cofactor.

It catalyses the reaction S-adenosyl-L-methionine = 1-aminocyclopropane-1-carboxylate + S-methyl-5'-thioadenosine + H(+). It functions in the pathway alkene biosynthesis; ethylene biosynthesis via S-adenosyl-L-methionine; ethylene from S-adenosyl-L-methionine: step 1/2. Functionally, catalyzes the formation of 1-aminocyclopropane-1-carboxylate, a direct precursor of ethylene in higher plants. In Cucurbita maxima (Pumpkin), this protein is 1-aminocyclopropane-1-carboxylate synthase CMW33 (ACS1).